The sequence spans 280 residues: Succinate dehydrogenase [ubiquinone] iron-sulfur subunit, mitochondrial (280 aa).

The N-terminal 28 residues, 1–28 (MAAVVAVSLKRWFPATTLGGACLQACRG), are a transit peptide targeting the mitochondrion. The 2Fe-2S ferredoxin-type domain maps to 40-131 (KKFAIYRWDP…DKVSKIYPLP (92 aa)). N6-acetyllysine occurs at positions 51 and 55. Residues Cys93, Cys98, Cys101, and Cys113 each coordinate [2Fe-2S] cluster. The segment at 146-218 (FYAQYKSIEP…PAVLMQAYRW (73 aa)) is interaction with SDHAF1. One can recognise a 4Fe-4S ferredoxin-type domain in the interval 176–206 (EREKLDGLYECILCACCSTSCPSYWWNGDKY). [4Fe-4S] cluster is bound by residues Cys186, Cys189, and Cys192. Cys196 provides a ligand contact to [3Fe-4S] cluster. Trp201 contacts a ubiquinone. [3Fe-4S] cluster-binding residues include Cys243 and Cys249. A [4Fe-4S] cluster-binding site is contributed by Cys253.

It belongs to the succinate dehydrogenase/fumarate reductase iron-sulfur protein family. As to quaternary structure, component of complex II composed of four subunits: the flavoprotein (FP) SDHA, iron-sulfur protein (IP) SDHB, and a cytochrome b560 composed of SDHC and SDHD. Interacts with SDHAF1; the interaction is required for iron-sulfur cluster incorporation into SDHB. [2Fe-2S] cluster is required as a cofactor. The cofactor is [3Fe-4S] cluster. It depends on [4Fe-4S] cluster as a cofactor.

It is found in the mitochondrion inner membrane. It catalyses the reaction a quinone + succinate = fumarate + a quinol. It carries out the reaction (R)-malate + a quinone = enol-oxaloacetate + a quinol. The enzyme catalyses (S)-malate + a quinone = enol-oxaloacetate + a quinol. Its pathway is carbohydrate metabolism; tricarboxylic acid cycle; fumarate from succinate (eukaryal route): step 1/1. With respect to regulation, enol-oxaloacetate inhibits the succinate dehydrogenase activity. Iron-sulfur protein (IP) subunit of the succinate dehydrogenase complex (mitochondrial respiratory chain complex II), responsible for transferring electrons from succinate to ubiquinone (coenzyme Q). SDH also oxidizes malate to the non-canonical enol form of oxaloacetate, enol-oxaloacetate. Enol-oxaloacetate, which is a potent inhibitor of the succinate dehydrogenase activity, is further isomerized into keto-oxaloacetate. The chain is Succinate dehydrogenase [ubiquinone] iron-sulfur subunit, mitochondrial (SDHB) from Sus scrofa (Pig).